The primary structure comprises 107 residues: High mobility group protein HMG-I/HMG-Y (107 aa).

The segment at 1–107 (MSESSSKSSQ…ISQESSEEEQ (107 aa)) is disordered. The residue at position 2 (Ser-2) is an N-acetylserine. Lys-7 bears the N6-acetyllysine mark. An ADP-ribosylserine modification is found at Ser-8. Ser-9 is subject to ADP-ribosylserine; alternate. Ser-9 carries the phosphoserine; alternate modification. Lys-15 carries the post-translational modification N6-acetyllysine; alternate. A Glycyl lysine isopeptide (Lys-Gly) (interchain with G-Cter in SUMO2); alternate cross-link involves residue Lys-15. Residues 15–24 (KQEKDGTEKR) are compositionally biased toward basic and acidic residues. Positions 21-31 (TEKRGRGRPRK) form a DNA-binding region, a.T hook 1. Arg-26 is modified (asymmetric dimethylarginine; alternate). Residue Arg-26 is modified to Omega-N-methylarginine; alternate. Arg-26 carries the post-translational modification Symmetric dimethylarginine; alternate. Ser-36 carries the phosphoserine; by HIPK2 and CDC2 modification. Thr-39 carries the phosphothreonine modification. A phosphoserine mark is found at Ser-44 and Ser-49. Thr-53 carries the phosphothreonine; by HIPK2 and CDC2 modification. 2 consecutive DNA-binding regions (a.T hook) follow at residues 53-63 (TPKRPRGRPKG) and 78-89 (APGRKPRGRPKK). Residues 53–77 (TPKRPRGRPKGSKNKGAAKTRKATT) are interaction with HIPK2. Residues 55–74 (KRPRGRPKGSKNKGAAKTRK) are compositionally biased toward basic residues. Residues Arg-58 and Arg-60 each carry the asymmetric dimethylarginine; by PRMT6; alternate modification. Residues Arg-58 and Arg-60 each carry the omega-N-methylarginine; by PRMT6; alternate modification. Residues 93 to 107 (EEEEGISQESSEEEQ) show a composition bias toward acidic residues. A phosphoserine mark is found at Ser-99, Ser-102, and Ser-103.

Belongs to the HMGA family. Interacts with HIPK2. Post-translationally, isoforms HMG-I and HMG-Y can be phosphorylated by HIPK2. Phosphorylation may modulate DNA-binding affinity. In terms of processing, methylation at Arg-58 is mutually exclusive with methylation at Arg-60.

It localises to the nucleus. The protein resides in the chromosome. HMG-I/Y bind preferentially to the minor groove of A+T rich regions in double-stranded DNA. It is suggested that these proteins could function in nucleosome phasing and in the 3'-end processing of mRNA transcripts. They are also involved in the transcription regulation of genes containing, or in close proximity to A+T-rich regions. In Cricetulus griseus (Chinese hamster), this protein is High mobility group protein HMG-I/HMG-Y (HMGA1).